The primary structure comprises 250 residues: Eukaryotic translation initiation factor 3 subunit K (250 aa).

A PCI domain is found at Tyr-54–Asn-235.

Belongs to the eIF-3 subunit K family. As to quaternary structure, component of the eukaryotic translation initiation factor 3 (eIF-3) complex.

It is found in the cytoplasm. Its function is as follows. Component of the eukaryotic translation initiation factor 3 (eIF-3) complex, which is involved in protein synthesis of a specialized repertoire of mRNAs and, together with other initiation factors, stimulates binding of mRNA and methionyl-tRNAi to the 40S ribosome. The eIF-3 complex specifically targets and initiates translation of a subset of mRNAs involved in cell proliferation. The protein is Eukaryotic translation initiation factor 3 subunit K of Cryptococcus neoformans var. neoformans serotype D (strain B-3501A) (Filobasidiella neoformans).